Reading from the N-terminus, the 98-residue chain is Aspartyl/glutamyl-tRNA(Asn/Gln) amidotransferase subunit C (98 aa).

The tract at residues 77-98 (NEAPNPEGDFFRVPQILNTDEE) is disordered.

The protein belongs to the GatC family. Heterotrimer of A, B and C subunits.

The enzyme catalyses L-glutamyl-tRNA(Gln) + L-glutamine + ATP + H2O = L-glutaminyl-tRNA(Gln) + L-glutamate + ADP + phosphate + H(+). It carries out the reaction L-aspartyl-tRNA(Asn) + L-glutamine + ATP + H2O = L-asparaginyl-tRNA(Asn) + L-glutamate + ADP + phosphate + 2 H(+). Its function is as follows. Allows the formation of correctly charged Asn-tRNA(Asn) or Gln-tRNA(Gln) through the transamidation of misacylated Asp-tRNA(Asn) or Glu-tRNA(Gln) in organisms which lack either or both of asparaginyl-tRNA or glutaminyl-tRNA synthetases. The reaction takes place in the presence of glutamine and ATP through an activated phospho-Asp-tRNA(Asn) or phospho-Glu-tRNA(Gln). This Crocosphaera subtropica (strain ATCC 51142 / BH68) (Cyanothece sp. (strain ATCC 51142)) protein is Aspartyl/glutamyl-tRNA(Asn/Gln) amidotransferase subunit C.